We begin with the raw amino-acid sequence, 452 residues long: FAD-linked oxidoreductase DDB_G0289697 (452 aa).

An FAD-binding PCMH-type domain is found at 44 to 212 (VVNTPLLIVY…TDFTFKLHPV (169 aa)). Pros-8alpha-FAD histidine is present on His81.

The protein belongs to the oxygen-dependent FAD-linked oxidoreductase family. Requires FAD as cofactor.

The sequence is that of FAD-linked oxidoreductase DDB_G0289697 from Dictyostelium discoideum (Social amoeba).